The following is a 343-amino-acid chain: Ribosomal RNA small subunit methyltransferase C (343 aa).

This sequence belongs to the methyltransferase superfamily. RsmC family. As to quaternary structure, monomer.

It localises to the cytoplasm. It catalyses the reaction guanosine(1207) in 16S rRNA + S-adenosyl-L-methionine = N(2)-methylguanosine(1207) in 16S rRNA + S-adenosyl-L-homocysteine + H(+). Functionally, specifically methylates the guanine in position 1207 of 16S rRNA in the 30S particle. The protein is Ribosomal RNA small subunit methyltransferase C of Escherichia coli O6:H1 (strain CFT073 / ATCC 700928 / UPEC).